The chain runs to 230 residues: Esterase OVCA2 (230 aa).

Active-site charge relay system residues include S124, D182, and H209.

It belongs to the LovG family.

It catalyses the reaction a carboxylic ester + H2O = an alcohol + a carboxylate + H(+). Its function is as follows. Exhibits ester hydrolase activity with a strong preference for long-chain alkyl ester substrates and high selectivity against a variety of short, branched, and substituted esters. Is able to hydrolyze ester bonds within a wide range of p-nitrophenyl derivatives (C2-C14) in vitro, with a strong preference toward substrates of &gt;8 carbons. The chain is Esterase OVCA2 (ovca2) from Xenopus tropicalis (Western clawed frog).